Reading from the N-terminus, the 88-residue chain is Small ribosomal subunit protein uS17 (88 aa).

The protein belongs to the universal ribosomal protein uS17 family. As to quaternary structure, part of the 30S ribosomal subunit.

One of the primary rRNA binding proteins, it binds specifically to the 5'-end of 16S ribosomal RNA. This Pseudomonas aeruginosa (strain LESB58) protein is Small ribosomal subunit protein uS17.